The sequence spans 471 residues: Trigger factor (471 aa).

The 80-residue stretch at 166–245 (DDFITIDINA…LTAVKVRELP (80 aa)) folds into the PPIase FKBP-type domain. The interval 442 to 471 (AAGVTGEDDDTEAEEERVTVSADDPGAARF) is disordered. The segment covering 447 to 456 (GEDDDTEAEE) has biased composition (acidic residues).

This sequence belongs to the FKBP-type PPIase family. Tig subfamily.

The protein resides in the cytoplasm. The enzyme catalyses [protein]-peptidylproline (omega=180) = [protein]-peptidylproline (omega=0). Involved in protein export. Acts as a chaperone by maintaining the newly synthesized protein in an open conformation. Functions as a peptidyl-prolyl cis-trans isomerase. This Renibacterium salmoninarum (strain ATCC 33209 / DSM 20767 / JCM 11484 / NBRC 15589 / NCIMB 2235) protein is Trigger factor.